Here is a 350-residue protein sequence, read N- to C-terminus: (S)-tetrahydroprotoberberine N-methyltransferase (350 aa).

S-adenosyl-L-methionine contacts are provided by Ser-91, Gly-129, Asn-153, Gln-157, Asp-179, Val-180, and Val-195. Cys-325 is an active-site residue.

This sequence belongs to the CFA/CMAS family. As to quaternary structure, homodimer.

It localises to the cytoplasm. The catalysed reaction is (S)-stylopine + S-adenosyl-L-methionine = (S)-cis-N-methylstylopine + S-adenosyl-L-homocysteine. It catalyses the reaction (S)-tetrahydropalmatine + S-adenosyl-L-methionine = (S)-cis-N-methyltetrahydropalmatine + S-adenosyl-L-homocysteine. The enzyme catalyses (S)-canadine + S-adenosyl-L-methionine = (S)-cis-N-methylcanadine + S-adenosyl-L-homocysteine. It carries out the reaction (S)-scoulerine + S-adenosyl-L-methionine = (S)-cis-N-methylscoulerine + S-adenosyl-L-homocysteine. It functions in the pathway alkaloid biosynthesis. In terms of biological role, N-methyltransferase with a broad substrate range, accepting protoberberine alkaloids (R,S)-stylopine, (R,S)-nandinine and (R,S)-tetrahydropalmatine, and to a lesser extent (R,S)-canadine, (R,S)-tetrahydrogroenlandicine (cheilanthifoline) and (S)-scoulerine. The chain is (S)-tetrahydroprotoberberine N-methyltransferase from Eschscholzia californica (California poppy).